Reading from the N-terminus, the 106-residue chain is Oncosphere antigen B (106 aa).

One can recognise a Fibronectin type-III domain in the interval 11–106 (LPQHFRWSQV…QSELRSMCIK (96 aa)).

The chain is Oncosphere antigen B (ONCB) from Hydatigena taeniaeformis (Feline tapeworm).